A 309-amino-acid chain; its full sequence is Probable HTH-type transcriptional regulator LtrA (309 aa).

An HTH lysR-type domain is found at 1–61; sequence MNLNLLPDLA…QRTTRKLRLS (61 aa). The H-T-H motif DNA-binding region spans 21–40; the sequence is FSAVARQNGITPSAVSRSVS.

The protein belongs to the LysR transcriptional regulatory family.

This Klebsiella pneumoniae protein is Probable HTH-type transcriptional regulator LtrA (ltrA).